The primary structure comprises 275 residues: Putative ankyrin repeat protein L715 (275 aa).

ANK repeat units follow at residues 94–123 (NINY…DINY), 124–153 (NNGL…NTND), 155–183 (IFQL…SIDP), and 184–213 (IYST…SDST). Residues 253 to 275 (NQDESDVGDDAENDIENDIEDDN) are disordered. Over residues 255-275 (DESDVGDDAENDIENDIEDDN) the composition is skewed to acidic residues.

The sequence is that of Putative ankyrin repeat protein L715 from Acanthamoeba polyphaga mimivirus (APMV).